Reading from the N-terminus, the 563-residue chain is Cytochrome P450 monooxygenase phqL (563 aa).

A run of 3 helical transmembrane segments spans residues Glu-20–Phe-40, Ile-52–Gly-72, and Ala-80–Leu-100. Asn-279 carries N-linked (GlcNAc...) asparagine glycosylation. The chain crosses the membrane as a helical span at residues Leu-362–Leu-382. Asn-419 carries an N-linked (GlcNAc...) asparagine glycan. Residue Cys-502 participates in heme binding.

This sequence belongs to the cytochrome P450 family. Heme is required as a cofactor.

The protein localises to the membrane. The protein operates within alkaloid biosynthesis. In terms of biological role, cytochrome P450 monooxygenase; part of the gene cluster that mediates the biosynthesis of paraherquamide, a fungal indole alkaloid that belongs to a family of natural products containing a characteristic bicyclo[2.2.2]diazaoctane core. The first steps in the biosynthesis of paraherquamide is the production of the beta-methyl-proline precursor from L-isoleucine. They require oxidation of a terminally hydroxylated L-isoleucine to the corresponding aldehyde by enzymes which have still to be identified. Spontaneous cyclization and dehydration would yield the 4-methyl pyrolline-5-carboxylic acid, which is then reduced by the pyrroline-5-carboxylate reductase phqD leading to the beta-methyl-proline precursor. The next step of paraherquamide biosynthesis involves coupling of beta-methyl-proline and L-tryptophan by the bimodular NRPS phqB, to produce a monooxopiperazine intermediate. The reductase (R) domain of phqB utilizes NADPH for hydride transfer to reduce the thioester bond of the T domain-tethered linear dipeptide to a hemithioaminal intermediate, which spontaneously cleaves the C-S bond to release the aldehyde product. This compound undergoes spontaneous cyclization and dehydration to give a dienamine which is reverse prenylated at C-2 by the reverse prenyltransferase phqJ. The other prenyltransferase present in the cluster, phqI may be a redundant gene in the pathway. During biosynthetic assembly, the key step to produce the polycyclic core is catalyzed by the bifunctional reductase and intramolecular [4+2] Diels-Alderase, phqE, resulting in formation of the [2.2.2] diazaoctane intermediate preparaherquamide. Following formation of preparaherquamide, an indole 2,3-epoxidation-initiated pinacol-like rearrangement is catalyzed by the phqK FAD-dependent monooxygenase. The prenyltransferase phqA, the cytochrome P450 monooxygenase phqL, and the FAD-linked oxidoreductase phqH (or the cytochrome P450 monooxygenase phqM), are proposed to be involved in the formation of the pyran ring. The FAD-dependent monooxygenase phqK is likely responsible for generation of the spiro-oxindole, and the N-methylation is likely mediated by the phqN methyltransferase leading to the isolable natural product paraherquamide F. However, the order of these biosynthetic steps has still to be determined. In late-stage paraherquamide biosynthesis, the third P450 monooxygenase, phqO, is probably responsible for the C-14 hydroxylation, transforming paraherquamide F to paraherquamide G, and paraherquamide E to the final product paraherquamide A. The expansion from the 6-membered ring pyran (in paraherquamides F and G) to the 7-membered dioxepin ring (in paraherquamides A and E) represents a poorly understood but intriguing process that probably involves the 2-oxoglutarate-dependent dioxygenase phqC. Finally, the remaining members of the paraherquamide cluster, including phqI as well as phqM (or phqH), do not have a clearly prescribed role and appear to be redundant. This Penicillium fellutanum protein is Cytochrome P450 monooxygenase phqL.